A 145-amino-acid chain; its full sequence is Synaptojanin-2-binding protein (145 aa).

The Cytoplasmic segment spans residues 1–117; it reads MNGRVDYLVT…VHRGEGEPSG (117 aa). The PDZ domain maps to 13 to 100; it reads EINLTRGPSG…AVSLRVQHRL (88 aa). Residues 118–138 traverse the membrane as a helical; Anchor for type IV membrane protein segment; sequence VPVAMVLLPVFALTMVAVWAF. Over 139 to 145 the chain is Mitochondrial intermembrane; that stretch reads VRYRKQL.

As to quaternary structure, binds (via the PDZ domain) to isoform 2A of SYNJ2 (via the unique motif in the C-terminus). Interacts (via C-terminus) with RALBP1. Interacts (via PDZ domain) with ACVR2A (via C-terminus) and ACVR2B (via C-terminus). Forms a ternary complex with ACVR2A and RALBP1. Interacts with MAPK12. Interacts with DLL1; enhances DLL1 protein stability, and promotes notch signaling in endothelial cells. Isoform 1 and isoform 2 are widely expressed, notably in brain, heart, lung, liver, kidney, skeletal muscle, ovary and testis. Isoform 3 is detected only in heart, spleen and testis.

It is found in the mitochondrion outer membrane. Its subcellular location is the cytoplasm. The protein resides in the perinuclear region. Isoform 1 regulates endocytosis of activin type 2 receptor kinases through the Ral/RALBP1-dependent pathway and may be involved in suppression of activin-induced signal transduction. Isoform 2 and isoform 3 show a stimulatory affect on activin-induced signal transduction and enhance activin type 2 expression at the cell surface. The polypeptide is Synaptojanin-2-binding protein (Mus musculus (Mouse)).